The chain runs to 213 residues: Orotate phosphoribosyltransferase (213 aa).

Lysine 26 provides a ligand contact to 5-phospho-alpha-D-ribose 1-diphosphate. Orotate is bound at residue 34-35 (FF). 5-phospho-alpha-D-ribose 1-diphosphate-binding positions include 72–73 (YK), arginine 98, lysine 99, lysine 102, histidine 104, and 123–131 (DDVISAGTS). Orotate-binding residues include serine 127 and arginine 155.

The protein belongs to the purine/pyrimidine phosphoribosyltransferase family. PyrE subfamily. Homodimer. Mg(2+) is required as a cofactor.

The enzyme catalyses orotidine 5'-phosphate + diphosphate = orotate + 5-phospho-alpha-D-ribose 1-diphosphate. It functions in the pathway pyrimidine metabolism; UMP biosynthesis via de novo pathway; UMP from orotate: step 1/2. Catalyzes the transfer of a ribosyl phosphate group from 5-phosphoribose 1-diphosphate to orotate, leading to the formation of orotidine monophosphate (OMP). This Neisseria meningitidis serogroup A / serotype 4A (strain DSM 15465 / Z2491) protein is Orotate phosphoribosyltransferase.